The primary structure comprises 411 residues: Glycogen synthase kinase-3 homolog MsK-2 (411 aa).

Residues 74-358 (YMAERAVGQG…ALEALVHPFF (285 aa)) enclose the Protein kinase domain. Residues 80-88 (VGQGSFGVV) and lysine 103 each bind ATP. Aspartate 199 functions as the Proton acceptor in the catalytic mechanism. Position 234 is a phosphotyrosine (tyrosine 234).

It belongs to the protein kinase superfamily. CMGC Ser/Thr protein kinase family. GSK-3 subfamily. As to expression, absent in leaves and petioles while a moderate expression is seen in the stems, roots, and nodes.

It catalyses the reaction L-seryl-[protein] + ATP = O-phospho-L-seryl-[protein] + ADP + H(+). It carries out the reaction L-threonyl-[protein] + ATP = O-phospho-L-threonyl-[protein] + ADP + H(+). This Medicago sativa (Alfalfa) protein is Glycogen synthase kinase-3 homolog MsK-2 (MSK-2).